We begin with the raw amino-acid sequence, 290 residues long: Elongation factor Ts (290 aa).

An involved in Mg(2+) ion dislocation from EF-Tu region spans residues 82-85; sequence TDFV.

The protein belongs to the EF-Ts family.

It is found in the cytoplasm. Functionally, associates with the EF-Tu.GDP complex and induces the exchange of GDP to GTP. It remains bound to the aminoacyl-tRNA.EF-Tu.GTP complex up to the GTP hydrolysis stage on the ribosome. The chain is Elongation factor Ts from Thiobacillus denitrificans (strain ATCC 25259 / T1).